Consider the following 247-residue polypeptide: Tyrosine recombinase XerD-like (247 aa).

Positions 1-72 constitute a Core-binding (CB) domain; sequence MIKHIEAFLA…TVNQFLHYLY (72 aa). The Tyr recombinase domain occupies 91 to 247; that stretch reads STKVPFTYQL…PITLEKYYRL (157 aa). The active site involves Arg-212. The active-site O-(3'-phospho-DNA)-tyrosine intermediate is the Tyr-244.

The protein belongs to the 'phage' integrase family. XerD-like subfamily.

It is found in the cytoplasm. Functionally, putative tyrosine recombinase. Not involved in the cutting and rejoining of the recombining DNA molecules on dif(SL) site. The polypeptide is Tyrosine recombinase XerD-like (Streptococcus uberis (strain ATCC BAA-854 / 0140J)).